Consider the following 277-residue polypeptide: Probable cytochrome c oxidase subunit 3 (277 aa).

Helical transmembrane passes span 20–40 (PWPILTSFALLILVAGGVSFM), 45–65 (FNHYILAFGVISVAYCLYSWW), 88–108 (IGMALFILTEIMFFGVFFASF), 173–193 (CVTALGLTIILGIFFTCMQAY), 211–231 (FYLATGFHGAHVIIGTIFLIV), and 255–275 (AWYWHFVDVVWLFLFTFVYIF).

The protein belongs to the cytochrome c oxidase subunit 3 family.

It localises to the cell membrane. The catalysed reaction is 4 Fe(II)-[cytochrome c] + O2 + 8 H(+)(in) = 4 Fe(III)-[cytochrome c] + 2 H2O + 4 H(+)(out). The sequence is that of Probable cytochrome c oxidase subunit 3 (ctaE) from Rickettsia bellii (strain RML369-C).